Here is a 508-residue protein sequence, read N- to C-terminus: ATP synthase subunit alpha, mitochondrial (508 aa).

171-178 (GDRQTGKT) is an ATP binding site.

This sequence belongs to the ATPase alpha/beta chains family. F-type ATPases have 2 components, CF(1) - the catalytic core - and CF(0) - the membrane proton channel. CF(1) has five subunits: alpha(3), beta(3), gamma(1), delta(1), epsilon(1). CF(0) has three main subunits: a, b and c.

The protein localises to the mitochondrion. Its subcellular location is the mitochondrion inner membrane. Mitochondrial membrane ATP synthase (F(1)F(0) ATP synthase or Complex V) produces ATP from ADP in the presence of a proton gradient across the membrane which is generated by electron transport complexes of the respiratory chain. F-type ATPases consist of two structural domains, F(1) - containing the extramembraneous catalytic core, and F(0) - containing the membrane proton channel, linked together by a central stalk and a peripheral stalk. During catalysis, ATP synthesis in the catalytic domain of F(1) is coupled via a rotary mechanism of the central stalk subunits to proton translocation. Subunits alpha and beta form the catalytic core in F(1). Rotation of the central stalk against the surrounding alpha(3)beta(3) subunits leads to hydrolysis of ATP in three separate catalytic sites on the beta subunits. Subunit alpha does not bear the catalytic high-affinity ATP-binding sites. This chain is ATP synthase subunit alpha, mitochondrial (ATPA), found in Phaseolus vulgaris (Kidney bean).